The chain runs to 219 residues: Large ribosomal subunit protein uL3 (219 aa).

Residues 133–145 are compositionally biased toward polar residues; the sequence is GRASHGNSRSHNV. Residues 133–153 are disordered; the sequence is GRASHGNSRSHNVPGSIGMAQ. Gln153 carries the post-translational modification N5-methylglutamine.

This sequence belongs to the universal ribosomal protein uL3 family. Part of the 50S ribosomal subunit. Forms a cluster with proteins L14 and L19. In terms of processing, methylated by PrmB.

Functionally, one of the primary rRNA binding proteins, it binds directly near the 3'-end of the 23S rRNA, where it nucleates assembly of the 50S subunit. In Paraburkholderia phymatum (strain DSM 17167 / CIP 108236 / LMG 21445 / STM815) (Burkholderia phymatum), this protein is Large ribosomal subunit protein uL3.